The sequence spans 208 residues: Small ribosomal subunit protein uS4A (208 aa).

Residues 98–161 (LRLDNVVFRM…RKVLRISEAL (64 aa)) form the S4 RNA-binding domain.

It belongs to the universal ribosomal protein uS4 family. As to quaternary structure, part of the 30S ribosomal subunit. Contacts protein S5. The interaction surface between S4 and S5 is involved in control of translational fidelity.

One of the primary rRNA binding proteins, it binds directly to 16S rRNA where it nucleates assembly of the body of the 30S subunit. Its function is as follows. With S5 and S12 plays an important role in translational accuracy. This Myxococcus xanthus (strain DK1622) protein is Small ribosomal subunit protein uS4A.